An 858-amino-acid polypeptide reads, in one-letter code: Leucine--tRNA ligase (858 aa).

A 'HIGH' region motif is present at residues 42 to 52 (PYPSGRLHMGH). Positions 618–622 (KMSKS) match the 'KMSKS' region motif. K621 provides a ligand contact to ATP.

It belongs to the class-I aminoacyl-tRNA synthetase family.

It localises to the cytoplasm. It catalyses the reaction tRNA(Leu) + L-leucine + ATP = L-leucyl-tRNA(Leu) + AMP + diphosphate. In Vibrio cholerae serotype O1 (strain ATCC 39315 / El Tor Inaba N16961), this protein is Leucine--tRNA ligase.